Here is a 1109-residue protein sequence, read N- to C-terminus: Protein translocase subunit SecA (1109 aa).

ATP contacts are provided by residues Gln-175, 193-197 (GEGKT), and Asp-695. Positions 1038-1109 (VRQAAPEQRQ…KYKNCHGRNS (72 aa)) are disordered. Composition is skewed to basic and acidic residues over residues 1045-1059 (QRQD…KQDL) and 1071-1088 (DTRE…KTVG). Zn(2+) is bound by residues Cys-1093, Cys-1095, Cys-1104, and His-1105. Residues 1099-1109 (KKYKNCHGRNS) show a composition bias toward basic residues.

This sequence belongs to the SecA family. Monomer and homodimer. Part of the essential Sec protein translocation apparatus which comprises SecA, SecYEG and auxiliary proteins SecDF. Other proteins may also be involved. The cofactor is Zn(2+).

Its subcellular location is the cell inner membrane. It localises to the cytoplasm. The catalysed reaction is ATP + H2O + cellular proteinSide 1 = ADP + phosphate + cellular proteinSide 2.. Its function is as follows. Part of the Sec protein translocase complex. Interacts with the SecYEG preprotein conducting channel. Has a central role in coupling the hydrolysis of ATP to the transfer of proteins into and across the cell membrane, serving as an ATP-driven molecular motor driving the stepwise translocation of polypeptide chains across the membrane. The protein is Protein translocase subunit SecA of Bacteroides fragilis (strain ATCC 25285 / DSM 2151 / CCUG 4856 / JCM 11019 / LMG 10263 / NCTC 9343 / Onslow / VPI 2553 / EN-2).